The sequence spans 130 residues: Anti-adapter protein IraD (130 aa).

It belongs to the GpW/Gp25 family. IraD subfamily. Interacts with RssB.

Its subcellular location is the cytoplasm. Inhibits RpoS proteolysis by regulating RssB activity, thereby increasing the stability of the sigma stress factor RpoS during oxidative stress. Its effect on RpoS stability is due to its interaction with RssB, which probably blocks the interaction of RssB with RpoS, and the consequent delivery of the RssB-RpoS complex to the ClpXP protein degradation pathway. The sequence is that of Anti-adapter protein IraD from Shigella boydii serotype 4 (strain Sb227).